A 297-amino-acid chain; its full sequence is Homoserine kinase (297 aa).

82–92 is a binding site for ATP; that stretch reads PLTRGLGSSAS.

The protein belongs to the GHMP kinase family. Homoserine kinase subfamily.

It is found in the cytoplasm. The enzyme catalyses L-homoserine + ATP = O-phospho-L-homoserine + ADP + H(+). It participates in amino-acid biosynthesis; L-threonine biosynthesis; L-threonine from L-aspartate: step 4/5. Functionally, catalyzes the ATP-dependent phosphorylation of L-homoserine to L-homoserine phosphate. This chain is Homoserine kinase, found in Bacillus cereus (strain ATCC 14579 / DSM 31 / CCUG 7414 / JCM 2152 / NBRC 15305 / NCIMB 9373 / NCTC 2599 / NRRL B-3711).